We begin with the raw amino-acid sequence, 443 residues long: Probable nitrate/nitrite antiporter NarK2 (443 aa).

12 helical membrane-spanning segments follow: residues 32-52 (ITTF…ALVV), 66-86 (LFWL…IWTF), 95-115 (HLVT…GFAV), 123-143 (WVLL…SGYM), 172-192 (IVQF…LLGG), 210-230 (NATF…WVYL), 256-276 (SLYI…PLLI), 292-312 (YAFL…PISD), 314-334 (LGGA…ALLV), 346-366 (FPMF…GNAS), 383-403 (VIGW…TLAA), and 409-429 (TGGF…NFFL).

The protein belongs to the major facilitator superfamily. Nitrate/nitrite porter (TC 2.A.1.8) family.

The protein resides in the cell membrane. The enzyme catalyses nitrate(in) + nitrite(out) = nitrate(out) + nitrite(in). Functionally, probable nitrate/nitrite antiporter that may be involved in nitrate import and nitrite export during anaerobic growth. This chain is Probable nitrate/nitrite antiporter NarK2, found in Thermus thermophilus.